The chain runs to 352 residues: Lipase chaperone (352 aa).

Residues 7–28 (LSLVAVVVAGGLTLYWRWPAAV) traverse the membrane as a helical segment.

This sequence belongs to the lipase chaperone family.

The protein resides in the cell inner membrane. Its function is as follows. May be involved in the folding of the extracellular lipase during its passage through the periplasm. The polypeptide is Lipase chaperone (lifO) (Pseudomonas wisconsinensis).